Here is a 300-residue protein sequence, read N- to C-terminus: Porphobilinogen deaminase (300 aa).

Residue C239 is modified to S-(dipyrrolylmethanemethyl)cysteine.

The protein belongs to the HMBS family. In terms of assembly, monomer. It depends on dipyrromethane as a cofactor.

The enzyme catalyses 4 porphobilinogen + H2O = hydroxymethylbilane + 4 NH4(+). It functions in the pathway porphyrin-containing compound metabolism; protoporphyrin-IX biosynthesis; coproporphyrinogen-III from 5-aminolevulinate: step 2/4. Its function is as follows. Tetrapolymerization of the monopyrrole PBG into the hydroxymethylbilane pre-uroporphyrinogen in several discrete steps. In Francisella tularensis subsp. tularensis (strain FSC 198), this protein is Porphobilinogen deaminase.